We begin with the raw amino-acid sequence, 581 residues long: Proline--tRNA ligase (581 aa).

This sequence belongs to the class-II aminoacyl-tRNA synthetase family. ProS type 1 subfamily. As to quaternary structure, homodimer.

The protein resides in the cytoplasm. The catalysed reaction is tRNA(Pro) + L-proline + ATP = L-prolyl-tRNA(Pro) + AMP + diphosphate. In terms of biological role, catalyzes the attachment of proline to tRNA(Pro) in a two-step reaction: proline is first activated by ATP to form Pro-AMP and then transferred to the acceptor end of tRNA(Pro). As ProRS can inadvertently accommodate and process non-cognate amino acids such as alanine and cysteine, to avoid such errors it has two additional distinct editing activities against alanine. One activity is designated as 'pretransfer' editing and involves the tRNA(Pro)-independent hydrolysis of activated Ala-AMP. The other activity is designated 'posttransfer' editing and involves deacylation of mischarged Ala-tRNA(Pro). The misacylated Cys-tRNA(Pro) is not edited by ProRS. This chain is Proline--tRNA ligase, found in Variovorax paradoxus (strain S110).